A 76-amino-acid chain; its full sequence is Exodeoxyribonuclease 7 small subunit (76 aa).

The protein belongs to the XseB family. As to quaternary structure, heterooligomer composed of large and small subunits.

The protein localises to the cytoplasm. It carries out the reaction Exonucleolytic cleavage in either 5'- to 3'- or 3'- to 5'-direction to yield nucleoside 5'-phosphates.. In terms of biological role, bidirectionally degrades single-stranded DNA into large acid-insoluble oligonucleotides, which are then degraded further into small acid-soluble oligonucleotides. This chain is Exodeoxyribonuclease 7 small subunit, found in Gluconacetobacter diazotrophicus (strain ATCC 49037 / DSM 5601 / CCUG 37298 / CIP 103539 / LMG 7603 / PAl5).